The sequence spans 122 residues: MYVQEHRLWGLMDKPHSAPCLMSLSLSFLICNKGRNAIRVQQSTDERMDAMLLWQCPTQGTRKNHESNSSLHHVPNWIFHSTIIPPNKGSKRCLRKVDWLLPRAGGVGGKRGVTADGDRVSF.

Belongs to the FAM223 family.

The protein is Protein FAM223A (FAM223A) of Homo sapiens (Human).